Here is a 136-residue protein sequence, read N- to C-terminus: Ig heavy chain V region BCL1 (136 aa).

Residues M1 to S19 form the signal peptide. One can recognise an Ig-like domain in the interval Q20–S135.

In Mus musculus (Mouse), this protein is Ig heavy chain V region BCL1.